Consider the following 62-residue polypeptide: Calmodulin regulator protein PCP4 (62 aa).

The segment at 1–39 (MSERQSAGATNGKDKTSGDNDGQKKVQEEFDIDMDAPET) is disordered. Positions 12-28 (GKDKTSGDNDGQKKVQE) are enriched in basic and acidic residues. Residues 28-40 (EEFDIDMDAPETE) are acidic; binds calcium and is required for modulating the calcium-binding kinetics of calmodulin. In terms of domain architecture, IQ spans 39–62 (TERAAVAIQSQFRKFQKKKAGSQS).

It belongs to the PCP4 family. In terms of assembly, binds to both calcium-free and calcium-bound calmodulin. The affinity for the calcium-bound form is 50-fold greater.

In terms of biological role, functions as a modulator of calcium-binding by calmodulin. Thereby, regulates calmodulin activity and the different processes it controls. For instance, may play a role in neuronal differentiation through activation of calmodulin-dependent kinase signaling pathways. The polypeptide is Calmodulin regulator protein PCP4 (Mus musculus (Mouse)).